A 75-amino-acid polypeptide reads, in one-letter code: Protein myomixer (75 aa).

Residues 1 to 5 (MPAVF) are Cytoplasmic-facing. A helical membrane pass occupies residues 6–28 (LLLRSLVVRLFGSRLAASGVQLL). The Extracellular segment spans residues 29-75 (RRILTTATGHLGTVLRNIWERISSQQSKEAILGCVLCLLNMHKKVDN). An AxLyCxL motif is present at residues 58–67 (AILGCVLCLL).

It belongs to the MYMX family. As to expression, specifically expressed in the developing myotome.

It is found in the cell membrane. In terms of biological role, myoblast-specific protein that mediates myoblast fusion, an essential step for the formation of multi-nucleated muscle fibers. Involved in membrane fusion downstream of the lipid mixing step mediated by mymk. Acts by generating membrane stresses via its extracellular C-terminus, leading to drive fusion pore formation. The protein is Protein myomixer of Danio rerio (Zebrafish).